The sequence spans 605 residues: Elongation factor 4 (605 aa).

A tr-type G domain is found at 11-193 (KCIRNFSIIA…QIVTRISPPQ (183 aa)). GTP-binding positions include 23-28 (DHGKST) and 140-143 (NKVD).

It belongs to the TRAFAC class translation factor GTPase superfamily. Classic translation factor GTPase family. LepA subfamily.

It localises to the cell membrane. It carries out the reaction GTP + H2O = GDP + phosphate + H(+). Required for accurate and efficient protein synthesis under certain stress conditions. May act as a fidelity factor of the translation reaction, by catalyzing a one-codon backward translocation of tRNAs on improperly translocated ribosomes. Back-translocation proceeds from a post-translocation (POST) complex to a pre-translocation (PRE) complex, thus giving elongation factor G a second chance to translocate the tRNAs correctly. Binds to ribosomes in a GTP-dependent manner. This chain is Elongation factor 4, found in Aster yellows witches'-broom phytoplasma (strain AYWB).